The primary structure comprises 354 residues: AT-rich binding protein (354 aa).

Residues 31 to 54 (IVCHTCQEELQTQDKFWKHIQDEH) form a C2H2-type 1 zinc finger. 2 disordered regions span residues 84–124 (LPLY…HDDQ) and 256–276 (EVQQ…SSAM). Composition is skewed to basic and acidic residues over residues 89–100 (KVSENDQQRDDV) and 109–124 (QKEP…HDDQ). A compositionally biased stretch (low complexity) spans 264–276 (TNNSTTASASSAM). 2 C2H2-type zinc fingers span residues 285-309 (YICD…RSVH) and 315-338 (FACE…KKKH).

In terms of assembly, homooctamer. In terms of tissue distribution, fat body.

Its subcellular location is the nucleus. Its function is as follows. May be a transcription factor for genes having (A+T) stretches in their promoter and/or enhancer regions. Binds to AT rich DNA. The protein is AT-rich binding protein of Sarcophaga peregrina (Flesh fly).